The chain runs to 78 residues: D-alanyl carrier protein (78 aa).

The region spanning 1–78 (MAFRENVLEI…MIITQLEALK (78 aa)) is the Carrier domain. An O-(pantetheine 4'-phosphoryl)serine modification is found at S36.

The protein belongs to the DltC family. In terms of processing, 4'-phosphopantetheine is transferred from CoA to a specific serine of apo-DCP.

It localises to the cytoplasm. The protein operates within cell wall biogenesis; lipoteichoic acid biosynthesis. Carrier protein involved in the D-alanylation of lipoteichoic acid (LTA). The loading of thioester-linked D-alanine onto DltC is catalyzed by D-alanine--D-alanyl carrier protein ligase DltA. The DltC-carried D-alanyl group is further transferred to cell membrane phosphatidylglycerol (PG) by forming an ester bond, probably catalyzed by DltD. D-alanylation of LTA plays an important role in modulating the properties of the cell wall in Gram-positive bacteria, influencing the net charge of the cell wall. This is D-alanyl carrier protein from Listeria monocytogenes serotype 4a (strain HCC23).